Consider the following 197-residue polypeptide: Probable GTP-binding protein EngB (197 aa).

The EngB-type G domain maps to 22-194; the sequence is DLPEIAFAGR…LETIARMTGI (173 aa). GTP is bound by residues 30–37, 57–61, 75–78, 142–145, and 173–175; these read GRSNVGKS, GKTRL, DLPG, TKAD, and FST. Mg(2+) is bound by residues serine 37 and threonine 59.

The protein belongs to the TRAFAC class TrmE-Era-EngA-EngB-Septin-like GTPase superfamily. EngB GTPase family. Mg(2+) serves as cofactor.

Functionally, necessary for normal cell division and for the maintenance of normal septation. The sequence is that of Probable GTP-binding protein EngB from Desulfosudis oleivorans (strain DSM 6200 / JCM 39069 / Hxd3) (Desulfococcus oleovorans).